The sequence spans 312 residues: Aspartate carbamoyltransferase catalytic subunit (312 aa).

Residues Arg-55 and Thr-56 each contribute to the carbamoyl phosphate site. Lys-83 is an L-aspartate binding site. Carbamoyl phosphate is bound by residues Arg-105, His-138, and Gln-141. 2 residues coordinate L-aspartate: Arg-171 and Arg-225. Carbamoyl phosphate is bound by residues Gly-266 and Pro-267.

The protein belongs to the aspartate/ornithine carbamoyltransferase superfamily. ATCase family. As to quaternary structure, heterododecamer (2C3:3R2) of six catalytic PyrB chains organized as two trimers (C3), and six regulatory PyrI chains organized as three dimers (R2).

The enzyme catalyses carbamoyl phosphate + L-aspartate = N-carbamoyl-L-aspartate + phosphate + H(+). It participates in pyrimidine metabolism; UMP biosynthesis via de novo pathway; (S)-dihydroorotate from bicarbonate: step 2/3. Catalyzes the condensation of carbamoyl phosphate and aspartate to form carbamoyl aspartate and inorganic phosphate, the committed step in the de novo pyrimidine nucleotide biosynthesis pathway. The polypeptide is Aspartate carbamoyltransferase catalytic subunit (Corynebacterium efficiens (strain DSM 44549 / YS-314 / AJ 12310 / JCM 11189 / NBRC 100395)).